Here is a 1265-residue protein sequence, read N- to C-terminus: Methionine synthase (1265 aa).

The Hcy-binding domain occupies 19 to 338 (QDEIEAILQE…DHIREIAEAV (320 aa)). Zn(2+)-binding residues include C260, C323, and C324. Residues 371 to 632 (FVNIGERCNV…IHKELLQLCE (262 aa)) enclose the Pterin-binding domain. Residues 382 to 384 (GSR), D449, N470, D537, N579, R585, and R591 each bind (6S)-5,6,7,8-tetrahydrofolate. The B12-binding N-terminal domain occupies 662–759 (QTDEWRNGPL…FMEKEREETK (98 aa)). Methylcob(III)alamin-binding positions include E709, 782–786 (GDVHD), H785, S830, T834, and A886. Residues 772 to 907 (QGTIVLATVK…DENLKDEYFE (136 aa)) form the B12-binding domain. An AdoMet activation domain is found at 923–1265 (SLKERRYLTL…LGPILGYDTD (343 aa)). Residues D974, R1172, and 1227 to 1228 (YF) each bind S-adenosyl-L-methionine. The residue at position 1264 (T1264) is a Phosphothreonine.

It belongs to the vitamin-B12 dependent methionine synthase family. As to quaternary structure, monomer. Dimer. Forms a multiprotein complex with MMACHC, MMADHC and MTRR. Requires methylcob(III)alamin as cofactor. Zn(2+) serves as cofactor.

It is found in the cytoplasm. The catalysed reaction is (6S)-5-methyl-5,6,7,8-tetrahydrofolate + L-homocysteine = (6S)-5,6,7,8-tetrahydrofolate + L-methionine. It functions in the pathway amino-acid biosynthesis; L-methionine biosynthesis via de novo pathway; L-methionine from L-homocysteine (MetH route): step 1/1. Catalyzes the transfer of a methyl group from methylcob(III)alamin (MeCbl) to homocysteine, yielding enzyme-bound cob(I)alamin and methionine in the cytosol. MeCbl is an active form of cobalamin (vitamin B12) used as a cofactor for methionine biosynthesis. Cob(I)alamin form is regenerated to MeCbl by a transfer of a methyl group from 5-methyltetrahydrofolate. The processing of cobalamin in the cytosol occurs in a multiprotein complex composed of at least MMACHC, MMADHC, MTRR (methionine synthase reductase) and MTR which may contribute to shuttle safely and efficiently cobalamin towards MTR in order to produce methionine. The chain is Methionine synthase (MTR) from Bos taurus (Bovine).